Here is a 216-residue protein sequence, read N- to C-terminus: NADH-quinone oxidoreductase subunit C (216 aa).

Belongs to the complex I 30 kDa subunit family. In terms of assembly, NDH-1 is composed of 14 different subunits. Subunits NuoB, C, D, E, F, and G constitute the peripheral sector of the complex.

It localises to the cell inner membrane. The catalysed reaction is a quinone + NADH + 5 H(+)(in) = a quinol + NAD(+) + 4 H(+)(out). Functionally, NDH-1 shuttles electrons from NADH, via FMN and iron-sulfur (Fe-S) centers, to quinones in the respiratory chain. The immediate electron acceptor for the enzyme in this species is believed to be ubiquinone. Couples the redox reaction to proton translocation (for every two electrons transferred, four hydrogen ions are translocated across the cytoplasmic membrane), and thus conserves the redox energy in a proton gradient. The chain is NADH-quinone oxidoreductase subunit C from Francisella tularensis subsp. holarctica (strain FTNF002-00 / FTA).